The following is a 159-amino-acid chain: HSP70 co-chaperone SNL1 (159 aa).

Residues 1–12 are Perinuclear space-facing; sequence MSHNAMEHWKSK. Residues 13 to 35 form a helical; Signal-anchor for type II membrane protein membrane-spanning segment; sequence LSKTSTSTYVLLAVIAVVFLVTI. Topologically, residues 36-159 are cytoplasmic; the sequence is RRPNGSKGKS…AMLKSLDSLK (124 aa). A disordered region spans residues 39-64; it reads NGSKGKSSKKRASKKNKKGKNQFEKA. Residues 44-58 are compositionally biased toward basic residues; sequence KSSKKRASKKNKKGK. Positions 73–159 constitute a BAG domain; that stretch reads QIDNVSLRYG…AMLKSLDSLK (87 aa).

Interacts with the HSP70 family members SSA1, SSA4, and SSB1. These interactions are strongly reduced by ADP and ATP.

It localises to the endoplasmic reticulum membrane. The protein localises to the nucleus membrane. Functionally, stimulator of ATPase activity of molecular chaperones of the HSP70 family (principally of the SSA class). Stimulation is important for HSP70-substrate complex dissociation after folding of newly synthesized or refolded proteins. SNL1 is probably involved in nuclear pore biogenesis and in particular the folding or refolding of misfolded NUP116, GLE2 and NIC96. The sequence is that of HSP70 co-chaperone SNL1 (SNL1) from Saccharomyces cerevisiae (strain ATCC 204508 / S288c) (Baker's yeast).